We begin with the raw amino-acid sequence, 149 residues long: uncharacterized protein (149 aa).

This sequence to Rhizobium NGR234A y4oM.

This is an uncharacterized protein from Sinorhizobium fredii (strain NBRC 101917 / NGR234).